We begin with the raw amino-acid sequence, 314 residues long: Cyclin-dependent kinase 2 (314 aa).

The region spanning 8 to 287 (FQRAEKIGEG…AKDALQHAYF (280 aa)) is the Protein kinase domain. ATP contacts are provided by residues 14–22 (IGEGTYGIV) and Lys37. Thr18 is subject to Phosphothreonine. Phosphotyrosine is present on Tyr19. Residue Asp130 is the Proton acceptor of the active site. Position 162 is a phosphotyrosine (Tyr162). A Phosphothreonine modification is found at Thr163.

The protein belongs to the protein kinase superfamily. CMGC Ser/Thr protein kinase family. CDC2/CDKX subfamily. In terms of assembly, interacts with cyclin CycG.

It catalyses the reaction L-seryl-[protein] + ATP = O-phospho-L-seryl-[protein] + ADP + H(+). The enzyme catalyses L-threonyl-[protein] + ATP = O-phospho-L-threonyl-[protein] + ADP + H(+). The catalysed reaction is [DNA-directed RNA polymerase] + ATP = phospho-[DNA-directed RNA polymerase] + ADP + H(+). Like Cdk1, could play a key role in the control of the eukaryotic cell cycle. The polypeptide is Cyclin-dependent kinase 2 (Drosophila melanogaster (Fruit fly)).